The primary structure comprises 288 residues: MGAPKQKWTSEEEDALRAGVRKHGAGKWRTIQKDPEFSPVLSSRSNIDLKDKWRNLSFSASGLGSSKLRVPKITGPSSSPSSSSQPLLLPAANKFTEATLPADAEKKPQDGKTLPKYGAMIMEALLELNEPNGSDIAAIFGFIEQRYAVQPTFRRFLASKLRRLADSNKIEKIDKSYRLPDSLATRTPAPMNASAPKQKDPSKPSKVSKAIGLFSASSPALEAAMAAAVKVADAEAKAHDAHDQTMEAERIFKMAEDTESLLIIAAEIYDRCSRGEITTLVPVAQREI.

Disordered stretches follow at residues 1-42, 62-87, and 181-206; these read MGAP…PVLS, GLGSSKLRVPKITGPSSSPSSSSQPL, and DSLATRTPAPMNASAPKQKDPSKPSK. Positions 1 to 60 constitute an HTH myb-type domain; the sequence is MGAPKQKWTSEEEDALRAGVRKHGAGKWRTIQKDPEFSPVLSSRSNIDLKDKWRNLSFSA. The H-T-H motif DNA-binding region spans 28–56; sequence WRTIQKDPEFSPVLSSRSNIDLKDKWRNL. Over residues 76–87 the composition is skewed to low complexity; that stretch reads PSSSPSSSSQPL. The H15 domain maps to 113–181; that stretch reads TLPKYGAMIM…KIDKSYRLPD (69 aa). Residues 230-250 adopt a coiled-coil conformation; sequence KVADAEAKAHDAHDQTMEAER.

This sequence belongs to the histone H1/H5 family. SMH subfamily. Forms a homodimer and heterodimers.

It is found in the nucleus. The protein resides in the chromosome. The protein localises to the nucleolus. It localises to the telomere. Its function is as follows. Binds preferentially double-stranded telomeric repeats, but may also bind to the single telomeric strand. This is Single myb histone 4 (SMH4) from Zea mays (Maize).